A 2961-amino-acid polypeptide reads, in one-letter code: Zinc finger ZZ-type and EF-hand domain-containing protein 1 (2961 aa).

The disordered stretch occupies residues 1–41 (MGNAPSHSSEDEAAAAGGEGWGPHQDWAAVSGTTPGPGVAA). The N-myristoyl glycine moiety is linked to residue Gly2. The region spanning 111–146 (CSSEQFEEAFAQFDAEGDGTVDAENMLEALKNSSGA) is the EF-hand domain. A DOC domain is found at 226-405 (LVQKEKESPG…AIWYWSLLTS (180 aa)). Phosphoserine is present on residues Ser240, Ser1475, Ser1488, and Ser1509. The segment at 1446–1531 (TADETSHLQP…PTRRPPFTRG (86 aa)) is disordered. The segment covering 1485–1502 (GDQSPGLGTQPKLPSSSG) has biased composition (polar residues). The residue at position 1512 (Thr1512) is a Phosphothreonine. Over residues 1516-1531 (PLSPSTPTRRPPFTRG) the composition is skewed to low complexity. At Ser1518 the chain carries Phosphoserine. Thr1521 and Thr1523 each carry phosphothreonine. A phosphoserine mark is found at Ser1537 and Ser1540. ZZ-type zinc fingers lie at residues 1778-1833 (NVDI…FTCD) and 1827-1882 (NMEF…MVTI). 16 residues coordinate Zn(2+): Cys1783, Cys1786, Cys1797, Cys1800, Cys1806, Cys1809, His1819, His1823, Cys1832, Cys1835, Cys1846, Cys1849, Cys1855, Cys1858, His1868, and His1872. Disordered stretches follow at residues 1994 to 2078 (AVQG…PSPE) and 2426 to 2455 (LELDERGDREEEVERPVSSPGDPEQKKLDP). The segment covering 2009–2027 (AVHEEIRPVDFKQRNKADK) has biased composition (basic and acidic residues). Over residues 2033–2043 (KDPSCQTQISD) the composition is skewed to polar residues. The segment covering 2426–2440 (LELDERGDREEEVER) has biased composition (basic and acidic residues). Ser2444 is modified (phosphoserine). At Lys2667 the chain carries N6-acetyllysine.

As to quaternary structure, interacts with KLF6 and KLF9. Interacts via (ZZ-type 2 zinc finger) with histone H3 trimethylated at 'Lys-4' (H3K4me3) and histone H3 acetylated at 'Lys-4' (H3K4ac). In terms of tissue distribution, expressed at low levels in cerebellum.

In terms of biological role, histone H3 reader which may act as a transcriptional coactivator for KLF6 and KLF9 transcription factors. The polypeptide is Zinc finger ZZ-type and EF-hand domain-containing protein 1 (Homo sapiens (Human)).